Consider the following 301-residue polypeptide: Acetylglutamate kinase (301 aa).

Substrate-binding positions include 68-69 (GG), arginine 90, and asparagine 195.

It belongs to the acetylglutamate kinase family. ArgB subfamily.

It localises to the cytoplasm. It carries out the reaction N-acetyl-L-glutamate + ATP = N-acetyl-L-glutamyl 5-phosphate + ADP. It participates in amino-acid biosynthesis; L-arginine biosynthesis; N(2)-acetyl-L-ornithine from L-glutamate: step 2/4. In terms of biological role, catalyzes the ATP-dependent phosphorylation of N-acetyl-L-glutamate. The polypeptide is Acetylglutamate kinase (Pseudomonas paraeruginosa (strain DSM 24068 / PA7) (Pseudomonas aeruginosa (strain PA7))).